Consider the following 502-residue polypeptide: TNF receptor-associated factor family protein DDB_G0268444 (502 aa).

The RING-type; degenerate zinc-finger motif lies at 28–68 (CSICYESVYKKEIYQCKEIHWFCKTCWAESLFKKKECMICR). TRAF-type zinc fingers lie at residues 129 to 183 (KHLK…SRSL) and 185 to 243 (NHYK…PKSN). Residues 261–295 (IESQSLQIKETNIKYENLLNKINKLEQLETESKCD) adopt a coiled-coil conformation. In terms of domain architecture, MATH spans 368–489 (KYKNRWSISN…DDSLVIDFSI (122 aa)).

This sequence belongs to the TNF receptor-associated factor family. A subfamily.

It is found in the cytoplasm. Its function is as follows. Probable adapter protein and signal transducer that links members of the tumor necrosis factor receptor family to different signaling pathways by association with the receptor cytoplasmic domain and kinases. The chain is TNF receptor-associated factor family protein DDB_G0268444 from Dictyostelium discoideum (Social amoeba).